We begin with the raw amino-acid sequence, 586 residues long: MAASSEEETDRRPIRRVRSKSDTPYLAEVRISLNLETAEEVERLAAMRSDSLVPGTHTPPIRRRSKFATLGRLFKPWKWRKKKSEKFKQTSAALERKISMRQSREELIKRGVLKEMYDKDGDLHNEEGLMENGQAVSSGSSSLPIITELELTSMAGDTCAYEVLPTSELMDGTVSEDLSSEPGSLSQDPSYKPAMLLPPKKTVGFPVDQEDTPVKQITLLKQPPALPPKPISRIANHIADSGAPVKLPCMPGKMSPPLPPKKVMICMPLGGTDFPYGPYSNQKSSQHHHTVLPSQLAAHQLQYGSQHFSTGSSSISIHPSIPPGCRVIEELNKTLAMTMQRLESSGLHGGESITKSGLSGYCDMRQVPTVVIECEDDKENVPHETSYDDSSCLYSRDEEEDDDDDDDDEDDDSSLYTNSLALKVLRKDSLAIKLSNRPSKRELEEKNILPMQTDEERLESRQQIGTKLTRRLSQRPTAEELEQRNILKPRNEQEEQEEKREIKRRLTRKLSQRPTVEELREKKILISFSDYVELADAQDYDRRADKPWTRLTAADKAAIRKELNEFKSTEMEVHELSRHLTRFHRP.

Residues 62–83 carry the Nuclear localization signal motif; the sequence is RRRSKFATLGRLFKPWKWRKKK. The stretch at 92-117 is one RPEL 1 repeat; that stretch reads AALERKISMRQSREELIKRGVLKEMY. Positions 373–414 are disordered; sequence ECEDDKENVPHETSYDDSSCLYSRDEEEDDDDDDDDEDDDSS. Residues 397 to 413 show a composition bias toward acidic residues; it reads DEEEDDDDDDDDEDDDS. RPEL repeat units lie at residues 428-453, 466-491, and 504-529; these read DSLA…PMQT, TKLT…KPRN, and RRLT…ISFS.

It belongs to the phosphatase and actin regulator family. In terms of assembly, interacts (via RPEL repeats) with ACTA1.

It is found in the cytoplasm. It localises to the synapse. The protein resides in the nucleus. Its function is as follows. Binds actin monomers (G actin) and plays a role in the reorganization of the actin cytoskeleton and in formation of actin stress fibers. The protein is Phosphatase and actin regulator 1 (phactr1) of Xenopus laevis (African clawed frog).